The sequence spans 682 residues: L-type lectin-domain containing receptor kinase VI.2 (682 aa).

The signal sequence occupies residues 1–26; that stretch reads MGTQRSMFIVSFLFKLFLFLSVHVRA. Residues 27–310 are Extracellular-facing; the sequence is QRTTTNFAFR…AKKEGLNSQV (284 aa). The legume-lectin like stretch occupies residues 29–277; the sequence is TTTNFAFRGF…AHYVMGWSFS (249 aa). The helical transmembrane segment at 311–331 threads the bilayer; it reads IVMIVALSAVMLVMLVLLFFF. Over 332–682 the chain is Cytoplasmic; sequence VMYKKRLGQE…RVSSTSRISQ (351 aa). A Protein kinase domain is found at 367 to 641; it reads FKKTGIIGTG…LRYLNGEENV (275 aa). Residues 373–381 and K395 each bind ATP; that span reads IGTGGFGTV. Residue D494 is the Proton acceptor of the active site.

In the C-terminal section; belongs to the protein kinase superfamily. Ser/Thr protein kinase family. This sequence in the N-terminal section; belongs to the leguminous lectin family. As to expression, strongly expressed in the vascular system and trichomes of the leaves. Also expressed in guard cells, anthers, stigmas and germinating seeds, but not found in petals or roots. Increased susceptibility to the bacteria Pseudomonas syringae, characterized by stronger necrotic symptoms and higher bacterial proliferation.

The protein resides in the cell membrane. The enzyme catalyses L-seryl-[protein] + ATP = O-phospho-L-seryl-[protein] + ADP + H(+). It carries out the reaction L-threonyl-[protein] + ATP = O-phospho-L-threonyl-[protein] + ADP + H(+). Its function is as follows. Involved in negative regulation of abscisic acid response in seed germination. In terms of biological role, involved in resistance response to the pathogenic bacteria Pseudomonas syringae. The protein is L-type lectin-domain containing receptor kinase VI.2 of Arabidopsis thaliana (Mouse-ear cress).